A 123-amino-acid chain; its full sequence is Urotensin-2 (123 aa).

Residues 1-20 (MDRVPFCCLLFIGLLNPLLS) form the signal peptide. 2 propeptides span residues 21 to 104 (LPVT…LART) and 107 to 109 (QHK). The disordered stretch occupies residues 57 to 88 (RQTMGTEAGESPGEAGPSTETPTPRGSMRKAF). A disulfide bridge connects residues C117 and C122.

It belongs to the urotensin-2 family. Brain specific. Predominantly expressed in motoneurons of the brainstem and spinal cord.

It localises to the secreted. Highly potent vasoconstrictor. The protein is Urotensin-2 (Uts2) of Mus musculus (Mouse).